Reading from the N-terminus, the 88-residue chain is MKVSVLITLAVLGVMFVWASAAELEQSGSDQKDSDSPAWLKSMERIFQSEERDCRKMFGGCSKHEDCCAHLACKRTFNYCAWDGSFSK.

A signal peptide spans 1-21 (MKVSVLITLAVLGVMFVWASA). Positions 22 to 52 (AELEQSGSDQKDSDSPAWLKSMERIFQSEER) are excised as a propeptide. Cystine bridges form between Cys-54–Cys-68, Cys-61–Cys-73, and Cys-67–Cys-80.

It belongs to the neurotoxin 10 (Hwtx-1) family. 41 (Jztx-36) subfamily. As to expression, expressed by the venom gland.

The protein resides in the secreted. In terms of biological role, probable ion channel inhibitor. This Chilobrachys guangxiensis (Chinese earth tiger tarantula) protein is U13-theraphotoxin-Cg1a.